The chain runs to 280 residues: Large ribosomal subunit protein uL2 (280 aa).

The interval 229 to 280 is disordered; it reads DHPHGGGEGKAPIGHPSPLTPWGKPTLGYKTRKKRKPSDRFIIQRANDKKEK.

Belongs to the universal ribosomal protein uL2 family. As to quaternary structure, part of the 50S ribosomal subunit. Forms a bridge to the 30S subunit in the 70S ribosome.

Its function is as follows. One of the primary rRNA binding proteins. Required for association of the 30S and 50S subunits to form the 70S ribosome, for tRNA binding and peptide bond formation. It has been suggested to have peptidyltransferase activity; this is somewhat controversial. Makes several contacts with the 16S rRNA in the 70S ribosome. This chain is Large ribosomal subunit protein uL2, found in Dictyoglomus turgidum (strain DSM 6724 / Z-1310).